Consider the following 387-residue polypeptide: uncharacterized protein (387 aa).

It is found in the virion. This is an uncharacterized protein from Acanthamoeba polyphaga (Amoeba).